Consider the following 176-residue polypeptide: Nucleoside triphosphate/diphosphate phosphatase (176 aa).

Catalysis depends on Arg23, which acts as the Proton donor. Mg(2+)-binding residues include Asn87, Asp103, Asp105, Asp107, Asp120, and Glu123.

The protein belongs to the Ntdp family. It depends on Mg(2+) as a cofactor.

The catalysed reaction is a ribonucleoside 5'-triphosphate + H2O = a ribonucleoside 5'-diphosphate + phosphate + H(+). It catalyses the reaction a ribonucleoside 5'-diphosphate + H2O = a ribonucleoside 5'-phosphate + phosphate + H(+). Functionally, has nucleoside phosphatase activity towards nucleoside triphosphates and nucleoside diphosphates. The polypeptide is Nucleoside triphosphate/diphosphate phosphatase (Bacillus cytotoxicus (strain DSM 22905 / CIP 110041 / 391-98 / NVH 391-98)).